The following is a 216-amino-acid chain: Uracil phosphoribosyltransferase (216 aa).

5-phospho-alpha-D-ribose 1-diphosphate-binding positions include arginine 81, arginine 106, and 135–143 (DPMLATGSS). Uracil-binding positions include isoleucine 200 and 205–207 (GDA). Residue aspartate 206 participates in 5-phospho-alpha-D-ribose 1-diphosphate binding.

This sequence belongs to the UPRTase family. The cofactor is Mg(2+).

It catalyses the reaction UMP + diphosphate = 5-phospho-alpha-D-ribose 1-diphosphate + uracil. The protein operates within pyrimidine metabolism; UMP biosynthesis via salvage pathway; UMP from uracil: step 1/1. Allosterically activated by GTP. Functionally, catalyzes the conversion of uracil and 5-phospho-alpha-D-ribose 1-diphosphate (PRPP) to UMP and diphosphate. In Porphyromonas gingivalis (strain ATCC 33277 / DSM 20709 / CIP 103683 / JCM 12257 / NCTC 11834 / 2561), this protein is Uracil phosphoribosyltransferase (upp).